We begin with the raw amino-acid sequence, 70 residues long: Sec-independent protein translocase protein TatA (70 aa).

The chain crosses the membrane as a helical span at residues 1 to 21; sequence MFGLGGQELILILLIILLLFG. A compositionally biased stretch (basic and acidic residues) spans 50–62; it reads FNKVVDEPPRKTP. Residues 50–70 form a disordered region; the sequence is FNKVVDEPPRKTPENSTGSKS.

This sequence belongs to the TatA/E family. As to quaternary structure, forms a complex with TatC.

Its subcellular location is the cell inner membrane. Functionally, part of the twin-arginine translocation (Tat) system that transports large folded proteins containing a characteristic twin-arginine motif in their signal peptide across membranes. TatA could form the protein-conducting channel of the Tat system. The protein is Sec-independent protein translocase protein TatA of Chlorobium limicola (strain DSM 245 / NBRC 103803 / 6330).